The sequence spans 84 residues: uncharacterized protein (84 aa).

This is an uncharacterized protein from Micrococcus luteus (Micrococcus lysodeikticus).